The chain runs to 647 residues: MAAEWGGGVGYSGSGPGRSRWRWSGSVWVRSVLLLLGGLRASATSTPVSLGSSPPCRHHVPSDTEVINKVHLKANHVVKRDVDEHLRIKTVYDKSVEELLPEKKNLVKNKLFPQAISYLEKTFQVRRPAGTILLSRQCATNQYLRKENDPHRYCTGECAAHTKCGPVIVPEEHLQQCRVYRGGKWPHGAVGVPDQEGISDADFVLYVGALATERCSHENIISYAAYCQQEANMDRPIAGYANLCPNMISTQPQEFVGMLSTVKHEVIHALGFSAGLFAFYHDKDGNPLTSRFADGLPPFNYSLGLYQWSDKVVRKVERLWDVRDNKIVRHTVYLLVTPRVVEEARKHFDCPVLEGMELENQGGVGTELNHWEKRLLENEAMTGSHTQNRVLSRITLALMEDTGRQMLSPYCDTLRSNPLQLTCRQDQRAVAVCNLQKFPKPLPQEYQYFDELSGIPAEDLPYYGGSVEIADYCPFSQEFSWHLSGEYQRSSDCRILENQPEIFKNYGAEKYGPHSVCLIQKSAFVMEKCERKLSYPDWGSGCYQVSCSPQGLKVWVQDTSYLCSRAGQVLPVSIQMNGWIHDGNLLCPSCWDFCELCPPETDPPATNLTRALPLDLCSCSSSLVVTLWLLLGNLFPLLAGFLLCIWH.

Residue His-264 participates in Zn(2+) binding. Glu-265 is an active-site residue. Residues His-268 and His-370 each coordinate Zn(2+).

Belongs to the peptidase M8 family. Requires Zn(2+) as cofactor. In terms of tissue distribution, expressed in all cell lines analyzed.

Its subcellular location is the cytoplasm. The protein resides in the lipid droplet. Its function is as follows. Metalloprotease. This is Leishmanolysin-like peptidase (LMLN) from Homo sapiens (Human).